Here is a 268-residue protein sequence, read N- to C-terminus: Glutamate 5-kinase (268 aa).

ATP is bound at residue lysine 15. Positions 55, 142, and 158 each coordinate substrate. An ATP-binding site is contributed by 178 to 179 (SD).

It belongs to the glutamate 5-kinase family.

It localises to the cytoplasm. The enzyme catalyses L-glutamate + ATP = L-glutamyl 5-phosphate + ADP. It participates in amino-acid biosynthesis; L-proline biosynthesis; L-glutamate 5-semialdehyde from L-glutamate: step 1/2. Functionally, catalyzes the transfer of a phosphate group to glutamate to form L-glutamate 5-phosphate. This chain is Glutamate 5-kinase, found in Oenococcus oeni (strain ATCC BAA-331 / PSU-1).